We begin with the raw amino-acid sequence, 154 residues long: Lipoprotein signal peptidase (154 aa).

3 helical membrane-spanning segments follow: residues 7-27 (VLYL…KNYI), 58-78 (IFSG…AVVV), and 88-108 (NWLF…NFID). Residues D117 and D133 contribute to the active site. Residues 128 to 148 (IFNIADSAITVGIVLVFIYLI) traverse the membrane as a helical segment.

Belongs to the peptidase A8 family.

It is found in the cell membrane. It catalyses the reaction Release of signal peptides from bacterial membrane prolipoproteins. Hydrolyzes -Xaa-Yaa-Zaa-|-(S,diacylglyceryl)Cys-, in which Xaa is hydrophobic (preferably Leu), and Yaa (Ala or Ser) and Zaa (Gly or Ala) have small, neutral side chains.. The protein operates within protein modification; lipoprotein biosynthesis (signal peptide cleavage). This protein specifically catalyzes the removal of signal peptides from prolipoproteins. The polypeptide is Lipoprotein signal peptidase (Lactobacillus gasseri (strain ATCC 33323 / DSM 20243 / BCRC 14619 / CIP 102991 / JCM 1131 / KCTC 3163 / NCIMB 11718 / NCTC 13722 / AM63)).